The following is a 389-amino-acid chain: Probable family 17 glucosidase SCW10 (389 aa).

Residues 1-18 (MRFSNFLTVSALLTGALG) form the signal peptide. A propeptide spanning residues 19-29 (APAVRHKHEKR) is cleaved from the precursor. A disordered region spans residues 70–134 (ASQATTSTLE…SSASSSISAS (65 aa)). A glycan (N-linked (GlcNAc...) asparagine) is linked at Asn279. The active-site Nucleophile is Glu326.

This sequence belongs to the glycosyl hydrolase 17 family. Glycosylated.

It localises to the secreted. Its subcellular location is the cell wall. In terms of biological role, glucanases possibly play a role in cell expansion during growth, in cell-cell fusion during mating, and in spore release during sporulation. In Saccharomyces cerevisiae (strain ATCC 204508 / S288c) (Baker's yeast), this protein is Probable family 17 glucosidase SCW10 (SCW10).